The primary structure comprises 384 residues: S-adenosylmethionine synthase (384 aa).

Histidine 15 is a binding site for ATP. Aspartate 17 contacts Mg(2+). Residue glutamate 43 coordinates K(+). 2 residues coordinate L-methionine: glutamate 56 and glutamine 99. Residues 99–109 (QSPDINQGVDR) are flexible loop. Residues 164–166 (DAK), 230–231 (RF), aspartate 239, 245–246 (RK), alanine 262, and lysine 266 contribute to the ATP site. Residue aspartate 239 participates in L-methionine binding. Lysine 270 is a binding site for L-methionine.

It belongs to the AdoMet synthase family. In terms of assembly, homotetramer; dimer of dimers. It depends on Mg(2+) as a cofactor. K(+) is required as a cofactor.

It is found in the cytoplasm. The catalysed reaction is L-methionine + ATP + H2O = S-adenosyl-L-methionine + phosphate + diphosphate. The protein operates within amino-acid biosynthesis; S-adenosyl-L-methionine biosynthesis; S-adenosyl-L-methionine from L-methionine: step 1/1. Catalyzes the formation of S-adenosylmethionine (AdoMet) from methionine and ATP. The overall synthetic reaction is composed of two sequential steps, AdoMet formation and the subsequent tripolyphosphate hydrolysis which occurs prior to release of AdoMet from the enzyme. The protein is S-adenosylmethionine synthase of Klebsiella pneumoniae (strain 342).